Reading from the N-terminus, the 264-residue chain is Thiazole synthase (264 aa).

The active-site Schiff-base intermediate with DXP is the Lys98. 1-deoxy-D-xylulose 5-phosphate-binding positions include Gly159, Ala185–Gly186, and Ala207–Thr208.

This sequence belongs to the ThiG family. Homotetramer. Forms heterodimers with either ThiH or ThiS.

Its subcellular location is the cytoplasm. It catalyses the reaction [ThiS sulfur-carrier protein]-C-terminal-Gly-aminoethanethioate + 2-iminoacetate + 1-deoxy-D-xylulose 5-phosphate = [ThiS sulfur-carrier protein]-C-terminal Gly-Gly + 2-[(2R,5Z)-2-carboxy-4-methylthiazol-5(2H)-ylidene]ethyl phosphate + 2 H2O + H(+). It functions in the pathway cofactor biosynthesis; thiamine diphosphate biosynthesis. In terms of biological role, catalyzes the rearrangement of 1-deoxy-D-xylulose 5-phosphate (DXP) to produce the thiazole phosphate moiety of thiamine. Sulfur is provided by the thiocarboxylate moiety of the carrier protein ThiS. In vitro, sulfur can be provided by H(2)S. The protein is Thiazole synthase of Mycobacterium marinum (strain ATCC BAA-535 / M).